The primary structure comprises 252 residues: Autophagy-related protein 27 (252 aa).

Positions 1 to 15 are cleaved as a signal peptide; sequence MILASLLTFATAALA. Positions 16–161 constitute an MRH domain; it reads FDCSDKELER…SMKTKAACIT (146 aa). The Lumenal segment spans residues 16 to 176; sequence FDCSDKELER…KKEKHDNGES (161 aa). Intrachain disulfides connect Cys18–Cys57, Cys66–Cys73, and Cys130–Cys159. The N-linked (GlcNAc...) asparagine glycan is linked to Asn49. Residues 177-197 traverse the membrane as a helical segment; sequence WGWFTWIFIFLVLFLSIYIIG. Residues 198 to 252 lie on the Cytoplasmic side of the membrane; that stretch reads GAWFQYNKGNAIDFQSALKEVVENFIELLKGLPSFGKEIIEKFTGRSNRGEYSAV.

Belongs to the ATG27 family.

Its subcellular location is the cytoplasmic vesicle membrane. It localises to the golgi apparatus membrane. The protein resides in the mitochondrion membrane. The protein localises to the preautophagosomal structure membrane. In terms of biological role, plays a key role in autophagy. Effector of VPS34 phosphatidylinositol 3-phosphate kinase signaling. Regulates the cytoplasm to vacuole transport (Cvt) vesicle formation. Plays a role in ATG protein retrieval from the pre-autophagosomal structure (PAS) and is especially required for autophagy-dependent cycling of ATG9. Finally, plays an important role in biofilm formation and resistance to antifungal compounds such as fluconazole, itraconazole, terbinafine and caspofungin. This Candida albicans (strain SC5314 / ATCC MYA-2876) (Yeast) protein is Autophagy-related protein 27.